The sequence spans 334 residues: N-acetyl-gamma-glutamyl-phosphate reductase (334 aa).

C154 is an active-site residue.

Belongs to the NAGSA dehydrogenase family. Type 1 subfamily.

Its subcellular location is the cytoplasm. The enzyme catalyses N-acetyl-L-glutamate 5-semialdehyde + phosphate + NADP(+) = N-acetyl-L-glutamyl 5-phosphate + NADPH + H(+). It functions in the pathway amino-acid biosynthesis; L-arginine biosynthesis; N(2)-acetyl-L-ornithine from L-glutamate: step 3/4. Its function is as follows. Catalyzes the NADPH-dependent reduction of N-acetyl-5-glutamyl phosphate to yield N-acetyl-L-glutamate 5-semialdehyde. The chain is N-acetyl-gamma-glutamyl-phosphate reductase from Escherichia coli O157:H7.